The sequence spans 389 residues: Phospho-N-acetylmuramoyl-pentapeptide-transferase (389 aa).

10 consecutive transmembrane segments (helical) span residues 25 to 45, 74 to 94, 97 to 117, 134 to 154, 190 to 210, 222 to 242, 259 to 279, 286 to 306, 311 to 331, and 366 to 386; these read RAVM…PFVI, MGGV…ADWG, FIWI…VDDY, FFWQ…SVSE, ISYP…IVGS, GLVI…AYVM, AGEL…FLWF, VFMG…IAVI, IVLF…MLQV, and QVVV…LSTL.

It belongs to the glycosyltransferase 4 family. MraY subfamily. Requires Mg(2+) as cofactor.

It is found in the cell inner membrane. It catalyses the reaction UDP-N-acetyl-alpha-D-muramoyl-L-alanyl-gamma-D-glutamyl-meso-2,6-diaminopimeloyl-D-alanyl-D-alanine + di-trans,octa-cis-undecaprenyl phosphate = di-trans,octa-cis-undecaprenyl diphospho-N-acetyl-alpha-D-muramoyl-L-alanyl-D-glutamyl-meso-2,6-diaminopimeloyl-D-alanyl-D-alanine + UMP. It participates in cell wall biogenesis; peptidoglycan biosynthesis. In terms of biological role, catalyzes the initial step of the lipid cycle reactions in the biosynthesis of the cell wall peptidoglycan: transfers peptidoglycan precursor phospho-MurNAc-pentapeptide from UDP-MurNAc-pentapeptide onto the lipid carrier undecaprenyl phosphate, yielding undecaprenyl-pyrophosphoryl-MurNAc-pentapeptide, known as lipid I. This chain is Phospho-N-acetylmuramoyl-pentapeptide-transferase, found in Ralstonia pickettii (strain 12J).